The primary structure comprises 255 residues: NAD(P)H-quinone oxidoreductase subunit K, chloroplastic (255 aa).

[4Fe-4S] cluster is bound by residues C47, C48, C112, and C143.

The protein belongs to the complex I 20 kDa subunit family. In terms of assembly, NDH is composed of at least 16 different subunits, 5 of which are encoded in the nucleus. Requires [4Fe-4S] cluster as cofactor.

It is found in the plastid. It localises to the chloroplast thylakoid membrane. The catalysed reaction is a plastoquinone + NADH + (n+1) H(+)(in) = a plastoquinol + NAD(+) + n H(+)(out). It carries out the reaction a plastoquinone + NADPH + (n+1) H(+)(in) = a plastoquinol + NADP(+) + n H(+)(out). In terms of biological role, NDH shuttles electrons from NAD(P)H:plastoquinone, via FMN and iron-sulfur (Fe-S) centers, to quinones in the photosynthetic chain and possibly in a chloroplast respiratory chain. The immediate electron acceptor for the enzyme in this species is believed to be plastoquinone. Couples the redox reaction to proton translocation, and thus conserves the redox energy in a proton gradient. This chain is NAD(P)H-quinone oxidoreductase subunit K, chloroplastic, found in Zygnema circumcarinatum (Green alga).